Consider the following 599-residue polypeptide: MVIEHIRNFSIIAHIDHGKSTLADRLLEFTGTVSSREKQDQFLDKMDLERERGITIKAQTVRLNYRADDGKDYVLNLIDTPGHVDFTYEVSRSLTACEGGLLVVDASQGVEAQTLANVYLALDANLEVFVVLNKIDLPAAEPERVKAEIEEIIGLDTHDAVLASAKEGIGTKDILEEIVKKIPPPQGDPAKPLKALLFDSWYDQYQGVIILVRIVDGVVKKGDKIQLMSNKKTHEVLKAGVFSPEMRETQQLCAGEVGFIIAGIREVADAKVGDTVTLLHNPCDAALAGYKEVKPMVFSGLYPIDTSQYEQLRDALAKLKLNDSSFSYDPETSLALGFGFRCGFLGLLHMEIIQERLEREFNLELITTAPTVVYRVHGTDGSLTTIQSANQLPPTQEIAYVEEPFILASIHVPNDFVGGILALCEEKRGVQREIKYLTPTRVMVVYELPLNEVVLDFYDRLKSITKGYASLDYELLDYRQSELVRLNIMINGEVVDALSLIIHKDKAYYRGRELVSKMKELIPRQMFEIAIQAAVGTKVIARETVKAMRKDVLAKCYGGDITRKRKLLEKQKEGKKRMKNVGNVELPQEAFLAILKVEG.

A tr-type G domain is found at 4-186; the sequence is EHIRNFSIIA…EIVKKIPPPQ (183 aa). GTP-binding positions include 16-21 and 133-136; these read DHGKST and NKID.

It belongs to the TRAFAC class translation factor GTPase superfamily. Classic translation factor GTPase family. LepA subfamily.

The protein resides in the cell inner membrane. It catalyses the reaction GTP + H2O = GDP + phosphate + H(+). In terms of biological role, required for accurate and efficient protein synthesis under certain stress conditions. May act as a fidelity factor of the translation reaction, by catalyzing a one-codon backward translocation of tRNAs on improperly translocated ribosomes. Back-translocation proceeds from a post-translocation (POST) complex to a pre-translocation (PRE) complex, thus giving elongation factor G a second chance to translocate the tRNAs correctly. Binds to ribosomes in a GTP-dependent manner. In Geobacter sp. (strain M21), this protein is Elongation factor 4.